Reading from the N-terminus, the 231-residue chain is Large ribosomal subunit protein uL1 (231 aa).

This sequence belongs to the universal ribosomal protein uL1 family. Part of the 50S ribosomal subunit.

Binds directly to 23S rRNA. The L1 stalk is quite mobile in the ribosome, and is involved in E site tRNA release. Its function is as follows. Protein L1 is also a translational repressor protein, it controls the translation of the L11 operon by binding to its mRNA. In Methylocella silvestris (strain DSM 15510 / CIP 108128 / LMG 27833 / NCIMB 13906 / BL2), this protein is Large ribosomal subunit protein uL1.